A 241-amino-acid chain; its full sequence is Glutathione S-transferase omega-1 (241 aa).

Residue serine 2 is modified to N-acetylserine. Positions 22 to 101 constitute a GST N-terminal domain; sequence GSIRIYSMRF…YLDEAYPGKK (80 aa). The active-site Nucleophile is cysteine 32. The residue at position 57 (lysine 57) is an N6-acetyllysine. Glutathione is bound by residues lysine 59, valine 72, and 85 to 86; that span reads ES. The region spanning 106 to 230 is the GST C-terminal domain; sequence DPYEKACQKM…DWQGFLELYL (125 aa). Serine 129 carries the post-translational modification Phosphoserine. An N6-acetyllysine mark is found at lysine 143, lysine 148, and lysine 152.

It belongs to the GST superfamily. Omega family. In terms of assembly, homodimer. As to expression, ubiquitous. Highest expression in liver, pancreas, skeletal muscle, spleen, thymus, colon, blood leukocyte and heart. Lowest expression in brain, placenta and lung.

Its subcellular location is the cytoplasm. The protein localises to the cytosol. The enzyme catalyses RX + glutathione = an S-substituted glutathione + a halide anion + H(+). It catalyses the reaction L-dehydroascorbate + 2 glutathione = glutathione disulfide + L-ascorbate. It carries out the reaction methylarsonate + 2 glutathione + H(+) = methylarsonous acid + glutathione disulfide + H2O. With respect to regulation, monomethylarsonic acid reductase activity is competitively inhibited by 1-chloro 2,4-dinitrobenzene (CDNB) and by deoxycholate. Exhibits glutathione-dependent thiol transferase and dehydroascorbate reductase activities. Has S-(phenacyl)glutathione reductase activity. Also has glutathione S-transferase activity. Participates in the biotransformation of inorganic arsenic and reduces monomethylarsonic acid (MMA) and dimethylarsonic acid. The polypeptide is Glutathione S-transferase omega-1 (GSTO1) (Homo sapiens (Human)).